The sequence spans 340 residues: Deubiquitinase SseL (340 aa).

The active site involves His-223. Cys-285 functions as the Nucleophile in the catalytic mechanism.

Belongs to the peptidase C79 family.

The protein localises to the secreted. The protein resides in the host cytoplasm. Effector proteins function to alter host cell physiology and promote bacterial survival in host tissues. This protease targets the host cell ubiquitin pathway by acting as a deubiquitinase in infected host cells. In Salmonella paratyphi B (strain ATCC BAA-1250 / SPB7), this protein is Deubiquitinase SseL (sseL).